Here is a 227-residue protein sequence, read N- to C-terminus: Uracil-DNA glycosylase (227 aa).

Aspartate 65 (proton acceptor) is an active-site residue.

This sequence belongs to the uracil-DNA glycosylase (UDG) superfamily. UNG family.

Its subcellular location is the cytoplasm. It carries out the reaction Hydrolyzes single-stranded DNA or mismatched double-stranded DNA and polynucleotides, releasing free uracil.. Its function is as follows. Excises uracil residues from the DNA which can arise as a result of misincorporation of dUMP residues by DNA polymerase or due to deamination of cytosine. This is Uracil-DNA glycosylase from Bacillus velezensis (strain DSM 23117 / BGSC 10A6 / LMG 26770 / FZB42) (Bacillus amyloliquefaciens subsp. plantarum).